A 173-amino-acid polypeptide reads, in one-letter code: Photosystem I assembly protein Ycf3 (173 aa).

TPR repeat units follow at residues 35-68 (AFAY…EEDP), 72-105 (AFIL…NAKM), and 120-153 (GSIA…APNN).

This sequence belongs to the Ycf3 family.

It localises to the cellular thylakoid membrane. Functionally, essential for the assembly of the photosystem I (PSI) complex. May act as a chaperone-like factor to guide the assembly of the PSI subunits. The protein is Photosystem I assembly protein Ycf3 of Synechococcus sp. (strain RCC307).